We begin with the raw amino-acid sequence, 99 residues long: Transmembrane protein 14A (99 aa).

3 helical membrane passes run 1–21 (MDLIGFGYAALVTFGSILGYK), 24–44 (GGVLSLIAGLFVGFLAGYGAY), and 79–99 (PAGLVAGLSLLMILRLVLLLL).

Belongs to the TMEM14 family.

It is found in the mitochondrion membrane. The protein resides in the endoplasmic reticulum membrane. Its function is as follows. Inhibits apoptosis via negative regulation of the mitochondrial outer membrane permeabilization involved in apoptotic signaling pathway. The sequence is that of Transmembrane protein 14A (TMEM14A) from Bos taurus (Bovine).